A 434-amino-acid chain; its full sequence is Transcription elongation factor B polypeptide 3 (434 aa).

Positions 142–161 (KPEPVDVHEQQASSSSMSYQ) are disordered. Polar residues predominate over residues 151–160 (QQASSSSMSY). Residues 221-230 (TLVSLCQTVL) form a BC box region. The F-box domain maps to 237–281 (IDHVGIVPFDLLKPVLDHASTDQLRHILDVNPMLVEDADEMFHEM). The interval 391–415 (ITPRGGGVPSTSRSRSNNNNNMNNG) is disordered.

Heterotrimer of an A, B and C subunit.

It is found in the nucleus. Functionally, SIII, also known as elongin, is a general transcription elongation factor that increases the RNA polymerase II transcription elongation past template-encoded arresting sites. Subunit A is transcriptionally active and its transcription activity is strongly enhanced by binding to the dimeric complex of the SIII regulatory subunits B and C (elongin BC complex). This Caenorhabditis elegans protein is Transcription elongation factor B polypeptide 3.